A 319-amino-acid polypeptide reads, in one-letter code: Quinolinate synthase (319 aa).

Iminosuccinate contacts are provided by H35 and S52. C97 is a binding site for [4Fe-4S] cluster. Iminosuccinate is bound by residues 123–125 (YIN) and S140. C183 is a [4Fe-4S] cluster binding site. Iminosuccinate is bound by residues 209–211 (HPE) and T226. Residue C276 coordinates [4Fe-4S] cluster.

Belongs to the quinolinate synthase family. Type 2 subfamily. It depends on [4Fe-4S] cluster as a cofactor.

The protein resides in the cytoplasm. It carries out the reaction iminosuccinate + dihydroxyacetone phosphate = quinolinate + phosphate + 2 H2O + H(+). Its pathway is cofactor biosynthesis; NAD(+) biosynthesis; quinolinate from iminoaspartate: step 1/1. In terms of biological role, catalyzes the condensation of iminoaspartate with dihydroxyacetone phosphate to form quinolinate. The protein is Quinolinate synthase of Microcystis aeruginosa (strain NIES-843 / IAM M-2473).